The following is a 37-amino-acid chain: Large ribosomal subunit protein bL36c (37 aa).

The protein belongs to the bacterial ribosomal protein bL36 family.

The protein localises to the plastid. It localises to the chloroplast. The polypeptide is Large ribosomal subunit protein bL36c (rpl36) (Porphyra purpurea (Red seaweed)).